Consider the following 199-residue polypeptide: MQLKRVAEAKLPTPWGDFLMIGFEEIATKHDHLALVYGDITSKEPVLARVHSECLTGDALFSLRCDCGFQLAAALSSIAEERRGLLLYHRQEGRNIGLLNKIRAYALQDQGSDTVKANHQLGFAADERDFTLCADMFKVLGVYSIRLLTNNPQKVDILTQAGINVAERIPLIVGRNPENARYLDTKAAKMGHLLHDRYK.

Residue 49-53 (RVHSE) coordinates GTP. Zn(2+) contacts are provided by Cys-54, Cys-65, and Cys-67. Residues Gln-70, 92–94 (EGR), and Thr-114 each bind GTP. Residue Asp-126 is the Proton acceptor of the active site. Residue Arg-128 is the Nucleophile of the active site. Positions 149 and 154 each coordinate GTP.

Belongs to the GTP cyclohydrolase II family. Zn(2+) is required as a cofactor.

It carries out the reaction GTP + 4 H2O = 2,5-diamino-6-hydroxy-4-(5-phosphoribosylamino)-pyrimidine + formate + 2 phosphate + 3 H(+). The protein operates within cofactor biosynthesis; riboflavin biosynthesis; 5-amino-6-(D-ribitylamino)uracil from GTP: step 1/4. In terms of biological role, catalyzes the conversion of GTP to 2,5-diamino-6-ribosylamino-4(3H)-pyrimidinone 5'-phosphate (DARP), formate and pyrophosphate. The polypeptide is GTP cyclohydrolase-2 (Baumannia cicadellinicola subsp. Homalodisca coagulata).